The chain runs to 427 residues: Histidinol dehydrogenase (427 aa).

NAD(+) is bound by residues tyrosine 125, glutamine 186, and asparagine 209. Positions 234, 256, and 259 each coordinate substrate. Zn(2+) contacts are provided by glutamine 256 and histidine 259. Active-site proton acceptor residues include glutamate 325 and histidine 326. Residues histidine 326, aspartate 359, glutamate 413, and histidine 419 each coordinate substrate. Aspartate 359 contributes to the Zn(2+) binding site. Histidine 419 lines the Zn(2+) pocket.

This sequence belongs to the histidinol dehydrogenase family. Zn(2+) is required as a cofactor.

It catalyses the reaction L-histidinol + 2 NAD(+) + H2O = L-histidine + 2 NADH + 3 H(+). The protein operates within amino-acid biosynthesis; L-histidine biosynthesis; L-histidine from 5-phospho-alpha-D-ribose 1-diphosphate: step 9/9. Functionally, catalyzes the sequential NAD-dependent oxidations of L-histidinol to L-histidinaldehyde and then to L-histidine. The polypeptide is Histidinol dehydrogenase (Leptospira interrogans serogroup Icterohaemorrhagiae serovar Lai (strain 56601)).